The chain runs to 314 residues: Epithelial-stromal interaction protein 1 (314 aa).

Disordered stretches follow at residues 1-72 (MYPR…PNET), 200-219 (NRSA…WKLP), 225-267 (PSRA…HQEE), and 292-314 (SQPG…GWGI). Positions 43 to 58 (AEPKGPKLERQGHGDQ) are enriched in basic and acidic residues. A coiled-coil region spans residues 71–180 (ETRRQKIQRI…QEDIRRATLR (110 aa)). The segment covering 232-267 (AHKDSPQKEDNQKLQKTRDGHQKNKLLETKGQHQEE) has biased composition (basic and acidic residues). Positions 305-314 (NMNSTDGWGI) are enriched in polar residues.

Its function is as follows. Plays a role in M1 macrophage polarization and is required for the proper regulation of gene expression during M1 versus M2 macrophage differentiation. Might play a role in RELA/p65 and STAT1 phosphorylation and nuclear localization upon activation of macrophages. This Rattus norvegicus (Rat) protein is Epithelial-stromal interaction protein 1 (Epsti1).